The chain runs to 547 residues: Chaperonin GroEL 1 (547 aa).

ATP contacts are provided by residues 30 to 33 (TLGP), K51, 87 to 91 (DGTTT), G415, and D495.

It belongs to the chaperonin (HSP60) family. As to quaternary structure, forms a cylinder of 14 subunits composed of two heptameric rings stacked back-to-back. Interacts with the co-chaperonin GroES.

Its subcellular location is the cytoplasm. It carries out the reaction ATP + H2O + a folded polypeptide = ADP + phosphate + an unfolded polypeptide.. Together with its co-chaperonin GroES, plays an essential role in assisting protein folding. The GroEL-GroES system forms a nano-cage that allows encapsulation of the non-native substrate proteins and provides a physical environment optimized to promote and accelerate protein folding. This chain is Chaperonin GroEL 1, found in Azorhizobium caulinodans (strain ATCC 43989 / DSM 5975 / JCM 20966 / LMG 6465 / NBRC 14845 / NCIMB 13405 / ORS 571).